Here is a 209-residue protein sequence, read N- to C-terminus: Uracil phosphoribosyltransferase (209 aa).

Residues R79, R104, and 131 to 139 contribute to the 5-phospho-alpha-D-ribose 1-diphosphate site; that span reads DPMLATGGS. Residues I194 and 199 to 201 contribute to the uracil site; that span reads GDA. Residue D200 participates in 5-phospho-alpha-D-ribose 1-diphosphate binding.

The protein belongs to the UPRTase family. Requires Mg(2+) as cofactor.

It carries out the reaction UMP + diphosphate = 5-phospho-alpha-D-ribose 1-diphosphate + uracil. It participates in pyrimidine metabolism; UMP biosynthesis via salvage pathway; UMP from uracil: step 1/1. Its activity is regulated as follows. Allosterically activated by GTP. Functionally, catalyzes the conversion of uracil and 5-phospho-alpha-D-ribose 1-diphosphate (PRPP) to UMP and diphosphate. The sequence is that of Uracil phosphoribosyltransferase from Chromohalobacter salexigens (strain ATCC BAA-138 / DSM 3043 / CIP 106854 / NCIMB 13768 / 1H11).